We begin with the raw amino-acid sequence, 35 residues long: Endochitinase 2 (35 aa).

The protein belongs to the glycosyl hydrolase 19 family. Chitinase class I subfamily.

It carries out the reaction Random endo-hydrolysis of N-acetyl-beta-D-glucosaminide (1-&gt;4)-beta-linkages in chitin and chitodextrins.. Its function is as follows. Defense against chitin-containing fungal pathogens. The chain is Endochitinase 2 from Capsicum chinense (Scotch bonnet).